We begin with the raw amino-acid sequence, 171 residues long: Ribosome maturation factor RimM (171 aa).

The PRC barrel domain maps to 94-168; that stretch reads NDEFYKDELI…MTIVPPEIVG (75 aa).

This sequence belongs to the RimM family. Binds ribosomal protein uS19.

The protein localises to the cytoplasm. Its function is as follows. An accessory protein needed during the final step in the assembly of 30S ribosomal subunit, possibly for assembly of the head region. Essential for efficient processing of 16S rRNA. May be needed both before and after RbfA during the maturation of 16S rRNA. It has affinity for free ribosomal 30S subunits but not for 70S ribosomes. This chain is Ribosome maturation factor RimM, found in Anaplasma phagocytophilum (strain HZ).